We begin with the raw amino-acid sequence, 402 residues long: DNA polymerase IV (402 aa).

Residues 5 to 187 (ILLADMNSFY…LPVRELFGVG (183 aa)) enclose the UmuC domain. Mg(2+)-binding residues include aspartate 9 and aspartate 105. Glutamate 106 is an active-site residue.

It belongs to the DNA polymerase type-Y family. In terms of assembly, monomer. The cofactor is Mg(2+).

It is found in the cytoplasm. The catalysed reaction is DNA(n) + a 2'-deoxyribonucleoside 5'-triphosphate = DNA(n+1) + diphosphate. Poorly processive, error-prone DNA polymerase involved in untargeted mutagenesis. Copies undamaged DNA at stalled replication forks, which arise in vivo from mismatched or misaligned primer ends. These misaligned primers can be extended by PolIV. Exhibits no 3'-5' exonuclease (proofreading) activity. May be involved in translesional synthesis, in conjunction with the beta clamp from PolIII. The protein is DNA polymerase IV of Pelotomaculum thermopropionicum (strain DSM 13744 / JCM 10971 / SI).